Here is a 660-residue protein sequence, read N- to C-terminus: Bifunctional polymyxin resistance protein ArnA (660 aa).

Residues 1-304 are formyltransferase ArnAFT; sequence MKTVVFAYHD…TLGLVQGSRL (304 aa). A (6R)-10-formyltetrahydrofolate-binding site is contributed by 86 to 88; sequence HLI. The active-site Proton donor; for formyltransferase activity is the His-104. (6R)-10-formyltetrahydrofolate is bound by residues Arg-114 and 136–140; that span reads VKRAD. The tract at residues 314–660 is dehydrogenase ArnADH; sequence RRTRVLILGV…RTVDLTDKPS (347 aa). NAD(+) contacts are provided by residues Asp-347 and 368-369; that span reads DI. UDP-alpha-D-glucuronate contacts are provided by residues Ala-393, Tyr-398, and 432-433; that span reads TS. Catalysis depends on Glu-434, which acts as the Proton acceptor; for decarboxylase activity. Residues Arg-460, Asn-492, 526-535, and Tyr-613 contribute to the UDP-alpha-D-glucuronate site; that span reads KLIDGGKQKR. Arg-619 (proton donor; for decarboxylase activity) is an active-site residue.

This sequence in the N-terminal section; belongs to the Fmt family. UDP-L-Ara4N formyltransferase subfamily. The protein in the C-terminal section; belongs to the NAD(P)-dependent epimerase/dehydratase family. UDP-glucuronic acid decarboxylase subfamily. In terms of assembly, homohexamer, formed by a dimer of trimers.

The catalysed reaction is UDP-alpha-D-glucuronate + NAD(+) = UDP-beta-L-threo-pentopyranos-4-ulose + CO2 + NADH. The enzyme catalyses UDP-4-amino-4-deoxy-beta-L-arabinose + (6R)-10-formyltetrahydrofolate = UDP-4-deoxy-4-formamido-beta-L-arabinose + (6S)-5,6,7,8-tetrahydrofolate + H(+). The protein operates within nucleotide-sugar biosynthesis; UDP-4-deoxy-4-formamido-beta-L-arabinose biosynthesis; UDP-4-deoxy-4-formamido-beta-L-arabinose from UDP-alpha-D-glucuronate: step 1/3. It functions in the pathway nucleotide-sugar biosynthesis; UDP-4-deoxy-4-formamido-beta-L-arabinose biosynthesis; UDP-4-deoxy-4-formamido-beta-L-arabinose from UDP-alpha-D-glucuronate: step 3/3. Its pathway is bacterial outer membrane biogenesis; lipopolysaccharide biosynthesis. In terms of biological role, bifunctional enzyme that catalyzes the oxidative decarboxylation of UDP-glucuronic acid (UDP-GlcUA) to UDP-4-keto-arabinose (UDP-Ara4O) and the addition of a formyl group to UDP-4-amino-4-deoxy-L-arabinose (UDP-L-Ara4N) to form UDP-L-4-formamido-arabinose (UDP-L-Ara4FN). The modified arabinose is attached to lipid A and is required for resistance to polymyxin and cationic antimicrobial peptides. This chain is Bifunctional polymyxin resistance protein ArnA, found in Escherichia coli O17:K52:H18 (strain UMN026 / ExPEC).